The chain runs to 64 residues: DNA gyrase inhibitor YacG (64 aa).

The Zn(2+) site is built by C9, C12, C28, and C32. The disordered stretch occupies residues K45–P64. Positions S54–P64 are enriched in acidic residues.

Belongs to the DNA gyrase inhibitor YacG family. In terms of assembly, interacts with GyrB. It depends on Zn(2+) as a cofactor.

Functionally, inhibits all the catalytic activities of DNA gyrase by preventing its interaction with DNA. Acts by binding directly to the C-terminal domain of GyrB, which probably disrupts DNA binding by the gyrase. The sequence is that of DNA gyrase inhibitor YacG from Klebsiella pneumoniae (strain 342).